The following is a 614-amino-acid chain: MIKKASLLTACSVTAFSAWAQDTSPDTLVVTANRFEQPRSTVLAPTTVVTRQDIDRWQSTSVNDVLRRLPGVDITQNGGSGQLSSIFIRGTNASHVLVLIDGVRLNLAGVSGSADLSQFPIALVQRVEYIRGPRSAVYGSDAIGGVVNIITTRDEPGTEISAGWGSNSYQNYDVSTQQQLGDKTRVTLLGDYAHTHGYDVVAYGNTGTQAQTDNDGFLSKTLYGALEHNFTDAWSGFVRGYGYDNRTNYDAYYSPGSPLLDTRKLYSQSWDAGLRYNGELIKSQLITSYSHSKDYNYDPHFGRYDSSATLDEMKQYTVQWANNVIVGHGSIGAGVDWQKQTTTPGTGYVENGYDQRNTGIYLTGLQQVGDFTFEGAARNDDNSQFGRHGTWQTSAGWEFIEGYRFIASYGTSYKAPNLGQLYGFYGNPNLDPEKSKQWEGAFEGLTAGVNWRISGYRNDVSDLIDYDDHTLKYYNEGKARIKGVEATANFDTGPLTHTVSYDYVDARNAITDTPLLRRAKQQVKYQLDWQLYDFDWGITYQYLGTRYDKDYSSYPYQTVKMGGVSLWDLAVAYPVTSHLTVRGKIANLFDKDYETVYGYQTAGREYTLSGSYTF.

The N-terminal stretch at 1–20 (MIKKASLLTACSVTAFSAWA) is a signal peptide. The TonB box signature appears at 26-33 (DTLVVTAN). In terms of domain architecture, TBDR plug spans 38 to 152 (PRSTVLAPTT…IGGVVNIITT (115 aa)). Cyanocob(III)alamin-binding positions include Leu83, Ser85, Asn92, and 110–111 (VS). The region spanning 155-614 (EPGTEISAGW…EYTLSGSYTF (460 aa)) is the TBDR beta-barrel domain. 3 beta stranded membrane passes run 158-165 (TEISAGWG), 169-178 (YQNYDVSTQQ), and 184-195 (TRVTLLGDYAHT). Residues Asp199, Gln211, Asp213, and Asp215 each contribute to the Ca(2+) site. Transmembrane regions (beta stranded) follow at residues 217 to 227 (FLSKTLYGALE) and 232 to 248 (DAWS…NRTN). Ca(2+)-binding residues include Tyr249 and Asp250. Ala251 is a cyanocob(III)alamin binding site. Asp261 contributes to the Ca(2+) binding site. Beta stranded transmembrane passes span 263-277 (RKLY…LRYN), 279-296 (ELIK…KDYN), 309-325 (TLDE…NNVI), 328-337 (HGSIGAGVDW), 353-369 (YDQR…QQVG), 371-381 (FTFEGAARNDD), 385-400 (FGRH…WEFI), 403-417 (YRFI…KAPN), 434-443 (KSKQWEGAFE), 449-458 (VNWRISGYRN), 473-490 (YYNE…TANF), 494-509 (PLTH…ARNA), 517-529 (RRAK…QLDW), and 535-550 (DWGI…YDKD). Thr309 contacts cyanocob(III)alamin. Arg517 contributes to the cyanocob(III)alamin binding site. Tyr551 serves as a coordination point for cyanocob(III)alamin. The next 3 membrane-spanning stretches (beta stranded) occupy residues 558–572 (TVKM…LAVA), 585–596 (IANLFDKDYETV), and 602–614 (AGRE…SYTF). The TonB C-terminal box signature appears at 597–614 (YGYQTAGREYTLSGSYTF).

Belongs to the TonB-dependent receptor family. BtuB (TC 1.B.14.3.1) subfamily.

The protein resides in the cell outer membrane. Functionally, involved in the active translocation of vitamin B12 (cyanocobalamin) across the outer membrane to the periplasmic space. It derives its energy for transport by interacting with the trans-periplasmic membrane protein TonB. The polypeptide is Vitamin B12 transporter BtuB (Escherichia coli O139:H28 (strain E24377A / ETEC)).